The primary structure comprises 294 residues: Indole-3-glycerol phosphate synthase (294 aa).

This sequence belongs to the TrpC family.

It carries out the reaction 1-(2-carboxyphenylamino)-1-deoxy-D-ribulose 5-phosphate + H(+) = (1S,2R)-1-C-(indol-3-yl)glycerol 3-phosphate + CO2 + H2O. Its pathway is amino-acid biosynthesis; L-tryptophan biosynthesis; L-tryptophan from chorismate: step 4/5. The chain is Indole-3-glycerol phosphate synthase from Parasynechococcus marenigrum (strain WH8102).